The following is a 626-amino-acid chain: Colicin-Ia (626 aa).

The translocation (T) stretch occupies residues 23–225 (EIMAVDIYVN…TRLSELEKNG (203 aa)). Polar residues predominate over residues 276–286 (QQLTQQKNTPD). The disordered stretch occupies residues 276 to 308 (QQLTQQKNTPDGKTIVSPEKFPGRSSTNHSIVV). Residues 282-385 (KNTPDGKTIV…LRQRLLDARN (104 aa)) form a receptor-binding (R) region. The tract at residues 450-626 (KDAINFTTEF…VEKANKFWGI (177 aa)) is channel (C). The next 2 helical transmembrane spans lie at 580 to 594 (ATAL…LTGS) and 597 to 612 (GIIG…GALI).

It belongs to the channel forming colicin family.

It localises to the cell membrane. Its function is as follows. This colicin is a channel-forming colicin. This class of transmembrane toxins depolarize the cytoplasmic membrane, leading to dissipation of cellular energy. In terms of biological role, colicins are polypeptide toxins produced by and active against E.coli and closely related bacteria. In Escherichia coli, this protein is Colicin-Ia (cia).